The following is a 189-amino-acid chain: Sec-independent protein translocase protein TatB (189 aa).

The helical transmembrane segment at 1–21 (MFGVGIFEVLVILIVAVIALG) threads the bilayer. The segment at 152 to 189 (TQKPQNSIDSINSKESSVDSLHSPSIVESTQSSSSKDS) is disordered. The span at 153-189 (QKPQNSIDSINSKESSVDSLHSPSIVESTQSSSSKDS) shows a compositional bias: polar residues.

Belongs to the TatB family. In terms of assembly, the Tat system comprises two distinct complexes: a TatABC complex, containing multiple copies of TatA, TatB and TatC subunits, and a separate TatA complex, containing only TatA subunits. Substrates initially bind to the TatABC complex, which probably triggers association of the separate TatA complex to form the active translocon.

The protein localises to the cell inner membrane. Its function is as follows. Part of the twin-arginine translocation (Tat) system that transports large folded proteins containing a characteristic twin-arginine motif in their signal peptide across membranes. Together with TatC, TatB is part of a receptor directly interacting with Tat signal peptides. TatB may form an oligomeric binding site that transiently accommodates folded Tat precursor proteins before their translocation. The protein is Sec-independent protein translocase protein TatB of Helicobacter hepaticus (strain ATCC 51449 / 3B1).